A 91-amino-acid chain; its full sequence is uncharacterized protein (91 aa).

A run of 3 helical transmembrane segments spans residues 9-29, 44-64, and 71-91; these read VLWGAVIAAFILSIVFYPFLP, LTVNKLAGTVMLPVLMVVFAW, and QFVFAVYILLICHIVVLCLAL.

The protein resides in the cell membrane. This is an uncharacterized protein from Bacillus subtilis (strain 168).